We begin with the raw amino-acid sequence, 343 residues long: DNA-directed RNA polymerase subunit alpha (343 aa).

The segment at 1 to 236 (MQEHYYKFWR…EQLQIFLTFD (236 aa)) is alpha N-terminal domain (alpha-NTD). Positions 253–343 (LNENLFRSVD…QPPQKRETQQ (91 aa)) are alpha C-terminal domain (alpha-CTD).

It belongs to the RNA polymerase alpha chain family. Homodimer. The RNAP catalytic core consists of 2 alpha, 1 beta, 1 beta' and 1 omega subunit. When a sigma factor is associated with the core the holoenzyme is formed, which can initiate transcription.

It carries out the reaction RNA(n) + a ribonucleoside 5'-triphosphate = RNA(n+1) + diphosphate. Its function is as follows. DNA-dependent RNA polymerase catalyzes the transcription of DNA into RNA using the four ribonucleoside triphosphates as substrates. The chain is DNA-directed RNA polymerase subunit alpha from Bdellovibrio bacteriovorus (strain ATCC 15356 / DSM 50701 / NCIMB 9529 / HD100).